The chain runs to 430 residues: Glucose-6-phosphate isomerase (430 aa).

Residue E284 is the Proton donor of the active site. Catalysis depends on residues H305 and K420.

Belongs to the GPI family.

The protein resides in the cytoplasm. It catalyses the reaction alpha-D-glucose 6-phosphate = beta-D-fructose 6-phosphate. Its pathway is carbohydrate biosynthesis; gluconeogenesis. It participates in carbohydrate degradation; glycolysis; D-glyceraldehyde 3-phosphate and glycerone phosphate from D-glucose: step 2/4. Catalyzes the reversible isomerization of glucose-6-phosphate to fructose-6-phosphate. The polypeptide is Glucose-6-phosphate isomerase (Mycoplasma pneumoniae (strain ATCC 29342 / M129 / Subtype 1) (Mycoplasmoides pneumoniae)).